Consider the following 423-residue polypeptide: Glutamate-1-semialdehyde 2,1-aminomutase (423 aa).

Lys-262 bears the N6-(pyridoxal phosphate)lysine mark.

Belongs to the class-III pyridoxal-phosphate-dependent aminotransferase family. HemL subfamily. As to quaternary structure, homodimer. Requires pyridoxal 5'-phosphate as cofactor.

It is found in the cytoplasm. It catalyses the reaction (S)-4-amino-5-oxopentanoate = 5-aminolevulinate. The protein operates within porphyrin-containing compound metabolism; protoporphyrin-IX biosynthesis; 5-aminolevulinate from L-glutamyl-tRNA(Glu): step 2/2. In Saccharophagus degradans (strain 2-40 / ATCC 43961 / DSM 17024), this protein is Glutamate-1-semialdehyde 2,1-aminomutase.